A 75-amino-acid polypeptide reads, in one-letter code: Conotoxin Vc6.15 (75 aa).

Positions 1 to 19 are cleaved as a signal peptide; it reads MEKLTILLHVAAVLMSTQA. Positions 20–41 are excised as a propeptide; that stretch reads LIQEQRQKAKINLFSKRKPSAE. Intrachain disulfides connect Cys49-Cys62, Cys55-Cys66, and Cys61-Cys71.

This sequence belongs to the conotoxin O2 superfamily. In terms of tissue distribution, expressed by the venom duct.

The protein resides in the secreted. Its function is as follows. Inhibits voltage-gated ion channels. The polypeptide is Conotoxin Vc6.15 (Conus victoriae (Queen Victoria cone)).